Consider the following 1100-residue polypeptide: DNA-directed RNA polymerase subunit beta (1100 aa).

The interval 1064–1100 is disordered; that stretch reads YEEDKEVDLMADVNQRRTPSRPTYESMSVGDIDDDDD. Residues 1079-1089 show a composition bias toward polar residues; it reads RRTPSRPTYES.

This sequence belongs to the RNA polymerase beta chain family. As to quaternary structure, in cyanobacteria the RNAP catalytic core is composed of 2 alpha, 1 beta, 1 beta', 1 gamma and 1 omega subunit. When a sigma factor is associated with the core the holoenzyme is formed, which can initiate transcription.

It carries out the reaction RNA(n) + a ribonucleoside 5'-triphosphate = RNA(n+1) + diphosphate. Its function is as follows. DNA-dependent RNA polymerase catalyzes the transcription of DNA into RNA using the four ribonucleoside triphosphates as substrates. The chain is DNA-directed RNA polymerase subunit beta from Synechococcus sp. (strain ATCC 27144 / PCC 6301 / SAUG 1402/1) (Anacystis nidulans).